A 294-amino-acid polypeptide reads, in one-letter code: Nucleophosmin (294 aa).

M1 carries the N-acetylmethionine modification. The necessary for interaction with APEX1 stretch occupies residues 1–117 (MEDSMDMDMS…PVHISGQHLV (117 aa)). The interval 1–186 (MEDSMDMDMS…DDDDFDDEEA (186 aa)) is required for interaction with SENP3. A Phosphoserine; by PLK1 and PLK2 modification is found at S4. Residue S10 is modified to Phosphoserine. K27 is covalently cross-linked (Glycyl lysine isopeptide (Lys-Gly) (interchain with G-Cter in SUMO2)). The residue at position 32 (K32) is an N6-acetyllysine; alternate. Residue K32 forms a Glycyl lysine isopeptide (Lys-Gly) (interchain with G-Cter in SUMO1); alternate linkage. K32 is covalently cross-linked (Glycyl lysine isopeptide (Lys-Gly) (interchain with G-Cter in SUMO2); alternate). Residue S43 is modified to Phosphoserine. Y67 carries the post-translational modification Phosphotyrosine. S70 carries the phosphoserine modification. A phosphothreonine mark is found at T75 and T95. The segment covering 120–132 (EEDAESEDEEEED) has biased composition (acidic residues). The segment at 120–247 (EEDAESEDEE…PKGPSSVEDI (128 aa)) is disordered. S125 is modified (phosphoserine; by CDK2). Phosphoserine occurs at positions 137 and 139. K141 is covalently cross-linked (Glycyl lysine isopeptide (Lys-Gly) (interchain with G-Cter in SUMO2)). Position 150 is an N6-acetyllysine; alternate (K150). K150 participates in a covalent cross-link: Glycyl lysine isopeptide (Lys-Gly) (interchain with G-Cter in SUMO2); alternate. Residues 152-157 (PQKKVK) carry the Nuclear localization signal motif. N6-acetyllysine is present on K154. A compositionally biased stretch (acidic residues) spans 161-187 (DEDDDDDDEEDDDEDDDDDDFDDEEAE). An interaction with NOP2 region spans residues 187–215 (EEKAPVKKSIRDTPAKNAQKSNQNGKDSK). A compositionally biased stretch (basic and acidic residues) spans 188-200 (EKAPVKKSIRDTP). Residues 191–197 (PVKKSIR) carry the Nuclear localization signal motif. The residue at position 199 (T199) is a Phosphothreonine; by CDK1, CDK2 and CDK6. The segment covering 202–222 (KNAQKSNQNGKDSKPSSTPRS) has biased composition (polar residues). The residue at position 207 (S207) is an ADP-ribosylserine. K212 is modified (N6-acetyllysine). K215 participates in a covalent cross-link: Glycyl lysine isopeptide (Lys-Gly) (interchain with G-Cter in SUMO2). T219 is subject to Phosphothreonine; by CDK1. The span at 223 to 235 (KGQESFKKQEKTP) shows a compositional bias: basic and acidic residues. The residue at position 227 (S227) is a Phosphoserine. At K229 the chain carries N6-acetyllysine. K230 carries the post-translational modification N6-acetyllysine; alternate. A Glycyl lysine isopeptide (Lys-Gly) (interchain with G-Cter in SUMO); alternate cross-link involves residue K230. Phosphothreonine; by CDK1 occurs at positions 234 and 237. S242 and S243 each carry phosphoserine. The interval 243–294 (SVEDIKAKMQASIEKGGSLPKVEAKFINYVKNCFRMTDQEAIQDLWQWRKSL) is required for nucleolar localization. K248 is covalently cross-linked (Glycyl lysine isopeptide (Lys-Gly) (interchain with G-Cter in SUMO1); alternate). Glycyl lysine isopeptide (Lys-Gly) (interchain with G-Cter in SUMO2); alternate cross-links involve residues K248 and K250. K250 bears the N6-acetyllysine; alternate mark. S254 carries the post-translational modification Phosphoserine. Position 257 is an N6-acetyllysine; alternate (K257). K257 is covalently cross-linked (Glycyl lysine isopeptide (Lys-Gly) (interchain with G-Cter in SUMO1); alternate). K257 is covalently cross-linked (Glycyl lysine isopeptide (Lys-Gly) (interchain with G-Cter in SUMO2); alternate). N6-acetyllysine is present on K257. Residue S260 is modified to Phosphoserine. Glycyl lysine isopeptide (Lys-Gly) (interchain with G-Cter in SUMO2); alternate cross-links involve residues K263, K267, and K273. K263 participates in a covalent cross-link: Glycyl lysine isopeptide (Lys-Gly) (interchain with G-Cter in SUMO); alternate. N6-acetyllysine; alternate occurs at positions 267 and 273. K267 is covalently cross-linked (Glycyl lysine isopeptide (Lys-Gly) (interchain with G-Cter in SUMO1); alternate). Residue K267 is modified to N6-succinyllysine; alternate. T279 carries the post-translational modification Phosphothreonine. N6-acetyllysine is present on K292.

The protein belongs to the nucleoplasmin family. As to quaternary structure, decamer formed by two pentameric rings associated in a head-to-head fashion. Disulfide-linked dimers under certain conditions. The SWAP complex consists of NPM1, NCL, PARP1 and SWAP70. Interacts with NSUN2 and SENP3. Interacts with the methylated form of RPS10. Interacts (via N-terminal domain) with APEX1; the interaction is RNA-dependent and decreases in hydrogen peroxide-damaged cells. Interacts with isoform 1 of NEK2. Interacts with ROCK2 and BRCA2. Interacts with RPGR. Interacts with CENPW. Interacts with EIF2AK2/PKR. Interacts with CEBPA (isoform 4). Interacts with DDX31; this interaction prevents interaction between NPM1 and HDM2. Interacts with MYC; competitive with NOP53. Interacts with NOP53; the interaction is direct and competitive with MYC. Interacts with LRRC34. Interacts with RRP1B. Interacts with NPM3. Interacts with ALKBH2. Interacts with TTF1 (via C-terminal region). Interacts with NOP2. Interacts with ARID3C (via REKLES DOMAIN); the interaction mediates ARID3C nuclear shuttling. In terms of assembly, (Microbial infection) Interacts with hepatitis delta virus S-HDAg. (Microbial infection) Interacts with HTLV1 Rex protein (via N-terminal nuclear localization signal). Post-translationally, acetylated at C-terminal lysine residues, thereby increasing affinity to histones. ADP-ribosylated. In terms of processing, phosphorylated at Ser-4 by PLK1 and PLK2. Phosphorylation at Ser-4 by PLK2 in S phase is required for centriole duplication and is sufficient to trigger centriole replication. Phosphorylation at Ser-4 by PLK1 takes place during mitosis. Phosphorylated by CDK2 at Ser-125 and Thr-199. Phosphorylation at Thr-199 may trigger initiation of centrosome duplication. Phosphorylated by CDK1 at Thr-199, Thr-219, Thr-234 and Thr-237 during cell mitosis. When these four sites are phosphorated, RNA-binding activity seem to be abolished. May be phosphorylated at Ser-70 by NEK2. The Thr-199 phosphorylated form has higher affinity for ROCK2. CDK6 triggers Thr-199 phosphorylation when complexed to Kaposi's sarcoma herpesvirus (KSHV) V-cyclin, leading to viral reactivation by reducing viral LANA levels. Post-translationally, sumoylated by ARF. Ubiquitinated. Ubiquitination leads to proteasomal degradation. Deubiquitinated by USP36.

The protein localises to the nucleus. The protein resides in the nucleolus. It localises to the nucleoplasm. Its subcellular location is the cytoplasm. It is found in the cytoskeleton. The protein localises to the microtubule organizing center. The protein resides in the centrosome. Involved in diverse cellular processes such as ribosome biogenesis, centrosome duplication, protein chaperoning, histone assembly, cell proliferation, and regulation of tumor suppressors p53/TP53 and ARF. Binds ribosome presumably to drive ribosome nuclear export. Associated with nucleolar ribonucleoprotein structures and bind single-stranded nucleic acids. Acts as a chaperonin for the core histones H3, H2B and H4. Stimulates APEX1 endonuclease activity on apurinic/apyrimidinic (AP) double-stranded DNA but inhibits APEX1 endonuclease activity on AP single-stranded RNA. May exert a control of APEX1 endonuclease activity within nucleoli devoted to repair AP on rDNA and the removal of oxidized rRNA molecules. In concert with BRCA2, regulates centrosome duplication. Regulates centriole duplication: phosphorylation by PLK2 is able to trigger centriole replication. Negatively regulates the activation of EIF2AK2/PKR and suppresses apoptosis through inhibition of EIF2AK2/PKR autophosphorylation. Antagonizes the inhibitory effect of ATF5 on cell proliferation and relieves ATF5-induced G2/M blockade. In complex with MYC enhances the transcription of MYC target genes. May act as chaperonin or cotransporter in the nucleolar localization of transcription termination factor TTF1. The sequence is that of Nucleophosmin from Homo sapiens (Human).